The sequence spans 432 residues: Ribosome biogenesis protein WDR12 homolog (432 aa).

Residues L13–Q97 are ubiquitin-like (UBL) domain. WD repeat units follow at residues L109 to F146, G148 to E190, G197 to D236, G265 to D303, N305 to V345, S352 to Y392, and G396 to S432.

Belongs to the WD repeat WDR12/YTM1 family.

The protein resides in the nucleus. Its subcellular location is the nucleolus. It is found in the nucleoplasm. Functionally, required for maturation of ribosomal RNAs and formation of the large ribosomal subunit. In Trichoplax adhaerens (Trichoplax reptans), this protein is Ribosome biogenesis protein WDR12 homolog.